Reading from the N-terminus, the 322-residue chain is Phospho-N-acetylmuramoyl-pentapeptide-transferase (322 aa).

Transmembrane regions (helical) follow at residues 10 to 30, 51 to 71, 79 to 99, 107 to 127, 146 to 166, 178 to 198, 203 to 223, 227 to 247, 250 to 270, and 302 to 322; these read YTALIAFLIVIIIGPIFIPML, NGTPTMGGIIMIVAILITGLT, MAVGLICIAGFGFIGFLDDFI, LGLKAYQKIILQVALSFYVAF, FVINVGILYIPIMMFIIVAIV, LASGVTLIVSVFFMLFASSIA, VAVLAAATVGACLGFLGFNSY, VFMGDTGSMALGGAVVAFSVL, SVLIIPIIGGIYFAEALSVLI, and VVFIFWIITVVLAWISIIAVF.

Belongs to the glycosyltransferase 4 family. MraY subfamily. Requires Mg(2+) as cofactor.

It is found in the cell membrane. It catalyses the reaction UDP-N-acetyl-alpha-D-muramoyl-L-alanyl-gamma-D-glutamyl-meso-2,6-diaminopimeloyl-D-alanyl-D-alanine + di-trans,octa-cis-undecaprenyl phosphate = di-trans,octa-cis-undecaprenyl diphospho-N-acetyl-alpha-D-muramoyl-L-alanyl-D-glutamyl-meso-2,6-diaminopimeloyl-D-alanyl-D-alanine + UMP. It participates in cell wall biogenesis; peptidoglycan biosynthesis. Functionally, catalyzes the initial step of the lipid cycle reactions in the biosynthesis of the cell wall peptidoglycan: transfers peptidoglycan precursor phospho-MurNAc-pentapeptide from UDP-MurNAc-pentapeptide onto the lipid carrier undecaprenyl phosphate, yielding undecaprenyl-pyrophosphoryl-MurNAc-pentapeptide, known as lipid I. The chain is Phospho-N-acetylmuramoyl-pentapeptide-transferase from Clostridioides difficile (strain 630) (Peptoclostridium difficile).